We begin with the raw amino-acid sequence, 279 residues long: Large ribosomal subunit protein uL2 (279 aa).

The disordered stretch occupies residues 224–279 (AMNPIDHPHGGGEGRTSGGRHPVTPWGKGTKGNRTRKSKASDKLIVRSRHAKKKGR). Positions 269–279 (VRSRHAKKKGR) are enriched in basic residues.

The protein belongs to the universal ribosomal protein uL2 family. As to quaternary structure, part of the 50S ribosomal subunit. Forms a bridge to the 30S subunit in the 70S ribosome.

Its function is as follows. One of the primary rRNA binding proteins. Required for association of the 30S and 50S subunits to form the 70S ribosome, for tRNA binding and peptide bond formation. It has been suggested to have peptidyltransferase activity; this is somewhat controversial. Makes several contacts with the 16S rRNA in the 70S ribosome. The protein is Large ribosomal subunit protein uL2 of Cereibacter sphaeroides (strain ATCC 17029 / ATH 2.4.9) (Rhodobacter sphaeroides).